A 137-amino-acid polypeptide reads, in one-letter code: Protein PsiE homolog (137 aa).

4 helical membrane passes run 15-35 (LRIT…AFLI), 55-75 (YYMT…ALIV), 82-102 (FHFP…RFII), and 108-128 (ATST…LFLA).

The protein belongs to the PsiE family.

It localises to the cell membrane. The protein is Protein PsiE homolog of Listeria innocua serovar 6a (strain ATCC BAA-680 / CLIP 11262).